The chain runs to 417 residues: MRLTLLLAALLGYIYCQETFVGDQVLEIIPSHEEQIRTLLQLEAEEHLELDFWKSPTIPGETVHVRVPFASIQAVKVFLESQGIDYSIMIEDVQVLLDQEREEMLFNQQRERGGNFNFEAYHTLEEIYQEMDNLVAENPGLVSKVNLGSSFENRPMNVLKFSTGGDKPAIWLDAGIHAREWVTQATALWTANKIASDYGTDPAITSLLNTLDIFLLPVTNPDGYVFSQTTNRMWRKTRSKRSGSGCVGVDPNRNWDANFGGPGASSSPCSDSYHGPKPNSEVEVKSIVDFIKSHGKVKAFITLHSYSQLLMFPYGYKCTKPDDFNELDEVAQKAAQALKRLHGTSYKVGPICSVIYQASGGSIDWAYDLGIKYSFAFELRDTAFYGFLLPAKQILPTAEETWLGLKTIMEHVRDHPY.

Residues 1-16 form the signal peptide; it reads MRLTLLLAALLGYIYC. A propeptide spans 17–112 (activation peptide); the sequence is QETFVGDQVL…EMLFNQQRER (96 aa). Positions 120 to 412 constitute a Peptidase M14 domain; the sequence is AYHTLEEIYQ…LGLKTIMEHV (293 aa). Zn(2+) contacts are provided by His-177 and Glu-180. Substrate is bound by residues 177-180, Arg-235, and 252-253; these read HARE and NR. A disulfide bridge connects residues Cys-246 and Cys-269. His-304 is a binding site for Zn(2+). 305–306 contributes to the substrate binding site; it reads SY. A disulfide bridge links Cys-318 with Cys-352. Position 356 (Tyr-356) interacts with substrate. The active-site Proton donor/acceptor is Glu-378.

The protein belongs to the peptidase M14 family. The cofactor is Zn(2+).

It localises to the secreted. It catalyses the reaction Similar to that of carboxypeptidase A (EC 3.4.17.1), but with a preference for bulkier C-terminal residues.. Carboxypeptidase that catalyzes the release of a C-terminal amino acid, with a preference for large aromatic C-terminal residues. The sequence is that of Carboxypeptidase A2 (Cpa2) from Rattus norvegicus (Rat).